The primary structure comprises 109 residues: ATP-dependent Clp protease adapter protein ClpS 2 (109 aa).

Residues 1–24 (MAGDGGRSGPSTPSTSVITKTKPR) form a disordered region.

The protein belongs to the ClpS family. Binds to the N-terminal domain of the chaperone ClpA.

In terms of biological role, involved in the modulation of the specificity of the ClpAP-mediated ATP-dependent protein degradation. This chain is ATP-dependent Clp protease adapter protein ClpS 2, found in Rhodopseudomonas palustris (strain ATCC BAA-98 / CGA009).